The chain runs to 799 residues: Target of rapamycin complex 1 subunit TCO89 (799 aa).

Residues N18–N41 are disordered. Phosphothreonine is present on residues T52 and T82. A phosphoserine mark is found at S84, S104, S107, S115, and S144. The span at N97 to T126 shows a compositional bias: polar residues. Disordered regions lie at residues N97–E171 and L201–D284. Basic and acidic residues predominate over residues D147–S156. Acidic residues predominate over residues T157–I170. Residues S203 and S215 each carry the phosphoserine modification. The span at D213–R224 shows a compositional bias: basic and acidic residues. Over residues L233 to S243 the composition is skewed to polar residues. Residues H244–E253 are compositionally biased toward basic and acidic residues. Residues T254–I269 are compositionally biased toward polar residues. Position 290 is a phosphoserine (S290). Positions A324–K391 are disordered. Residues S332–A346 show a composition bias toward basic and acidic residues. Residues R348 to R363 are compositionally biased toward low complexity. S397 is modified (phosphoserine). Disordered regions lie at residues F418–F476 and N538–N568. Polar residues-rich tracts occupy residues N420–G429 and G461–F476. Phosphoserine is present on S575. A disordered region spans residues I663–D685. S707 bears the Phosphoserine mark.

It belongs to the TORC subunit TCO89 family. As to quaternary structure, the target of rapamycin complex 1 (TORC1) is composed of at least KOG1, LST8, TCO89 and either TOR1 (TORC1-A) or TOR2 (TORC1-B). Interacts with PIB2; following activation of PIB2 by glutamine or cysteine. TORC1 binds to and is inhibited by FKBP-rapamycin.

Its subcellular location is the cell membrane. It is found in the vacuole membrane. In terms of biological role, component of TORC1, which regulates multiple cellular processes to control cell growth in response to environmental signals. Nutrient limitation and environmental stress signals cause inactivation of TORC1. Active TORC1 positively controls ribosome biogenesis via control of rRNA, ribosomal protein and tRNA gene expression, and rRNA processing. TORC1 positively controls protein biosynthesis by regulation of mRNA stability, translation initiation factor activity, and high-affinity amino acid permeases that serve to provide amino acids for use by the translation machinery. TORC1 also promotes growth by sequestering a number of nutrient and general stress-responsive transcription factors in the cytoplasm. TORC1 negatively controls macroautophagy, a process to recycle surplus cytoplasmic mass under nutrient starvation conditions. This chain is Target of rapamycin complex 1 subunit TCO89 (TCO89), found in Saccharomyces cerevisiae (strain ATCC 204508 / S288c) (Baker's yeast).